A 444-amino-acid chain; its full sequence is Radical S-adenosyl methionine domain-containing protein 1, mitochondrial (444 aa).

Residues 1-39 constitute a mitochondrion transit peptide; sequence MSTRVLTLTLLKKRHLMQCFWSTVGSVHLRSIASDKIPS. Residues 40–274 form the Radical SAM core domain; the sequence is HAVEASLYVH…CRVLEESGFH (235 aa). Tyrosine 47 is a binding site for S-adenosyl-L-methionine. [4Fe-4S] cluster is bound by residues cysteine 53, cysteine 57, and cysteine 60. S-adenosyl-L-methionine is bound by residues glycine 102, 103 to 104, glutamate 135, glutamine 162, arginine 174, and aspartate 199; that span reads GT.

It belongs to the anaerobic coproporphyrinogen-III oxidase family. HemW subfamily. The cofactor is [4Fe-4S] cluster.

It localises to the mitochondrion. May be a heme chaperone, appears to bind heme. Homologous bacterial proteins do not have oxygen-independent coproporphyrinogen-III oxidase activity. Binds 1 [4Fe-4S] cluster. The cluster is coordinated with 3 cysteines and an exchangeable S-adenosyl-L-methionine. In Danio rerio (Zebrafish), this protein is Radical S-adenosyl methionine domain-containing protein 1, mitochondrial (rsad1).